We begin with the raw amino-acid sequence, 649 residues long: FAS-associated factor 1 (649 aa).

In terms of domain architecture, UBA spans 1–57 (MASNMDREMILADFQACTGIENIDEAITLLEQNNWDLVAAINGVIPQENGILQSDFG). Disordered regions lie at residues 56–84 (FGGETMPGPTFDPASHPAPASTPSSSAFR) and 266–290 (RRTSPVQTREQSEEQSTDVHMVSDS). Residues 68 to 82 (PASHPAPASTPSSSA) show a composition bias toward low complexity. S319 is modified (phosphoserine). In terms of domain architecture, UBX spans 568–645 (NAEPVSKLRI…NLFPQETLFL (78 aa)). T579 carries the post-translational modification Phosphothreonine. The residue at position 581 (S581) is a Phosphoserine.

As to quaternary structure, interacts with CDT1 and ATPase VCP/p97. Interacts (via UBA domain) with FAS (via death domain). Interacts (via UBA domain) with NLRP12 (via DAPIN/PYRIN domain).

The protein localises to the nucleus. In terms of biological role, ubiquitin-binding protein. Required for the progression of DNA replication forks by targeting DNA replication licensing factor CDT1 for degradation. Potentiates but cannot initiate FAS-induced apoptosis. The chain is FAS-associated factor 1 (Faf1) from Mus musculus (Mouse).